Consider the following 59-residue polypeptide: MSEIDKSTIDKYINILKSKLDQKKNELLSKINMEYEKTLKQRLDELEKLKGNILKEVQK.

To E.hirae NtpH. Sul-ATPase is composed of six (or maybe five) subunits: alpha, beta, delta, gamma, C (proteolipid), and possibly epsilon.

The catalysed reaction is ATP + H2O + 4 H(+)(in) = ADP + phosphate + 5 H(+)(out). The polypeptide is Membrane-associated ATPase epsilon chain (atpE) (Sulfurisphaera tokodaii (strain DSM 16993 / JCM 10545 / NBRC 100140 / 7) (Sulfolobus tokodaii)).